Here is a 375-residue protein sequence, read N- to C-terminus: Alpha-2,8-sialyltransferase 8B (375 aa).

Residues 1–6 lie on the Cytoplasmic side of the membrane; that stretch reads MQLQFR. The helical; Signal-anchor for type II membrane protein transmembrane segment at 7-23 threads the bilayer; sequence SWMLAALTLLVVFLIFA. Residues 24 to 375 are Lumenal-facing; the sequence is DISEIEEEIG…LTVGQCDGAT (352 aa). Asn-60, Asn-72, Asn-89, and Asn-134 each carry an N-linked (GlcNAc...) asparagine glycan. 2 disulfide bridges follow: Cys-157-Cys-307 and Cys-171-Cys-371. 2 residues coordinate CMP-N-acetyl-beta-neuraminate: Asn-162 and Asn-185. N-linked (GlcNAc...) asparagine glycans are attached at residues Asn-219 and Asn-234. CMP-N-acetyl-beta-neuraminate is bound by residues Thr-294, Thr-295, Gly-296, Trp-316, Tyr-329, and His-330. His-346 serves as the catalytic Proton donor/acceptor.

It belongs to the glycosyltransferase 29 family. Autopolysialylated. Autopolysialylation is not a prerequisite for the polysialylation acitity, but enhances the polysialylation acitity. Highly expressed in fetal brain, kidney and heart and to a much lesser extent in adult heart and thymus.

It localises to the golgi apparatus membrane. Its subcellular location is the secreted. It is found in the cell membrane. The catalysed reaction is [N-acetyl-alpha-D-neuraminosyl-(2-&gt;8)](n) + CMP-N-acetyl-beta-neuraminate = [N-acetyl-alpha-D-neuraminosyl-(2-&gt;8)](n+1) + CMP + H(+). It participates in protein modification; protein glycosylation. In terms of biological role, catalyzes the transfer of a sialic acid from a CMP-linked sialic acid donor onto a terminal alpha-2,3-, alpha-2,6-, or alpha-2,8-linked sialic acid of an N-linked glycan acceptor through alpha-2,8-linkages. Therefore, participates in polysialic acid synthesis on various sialylated N-acetyllactosaminyl oligosaccharides (alpha-2,3-, alpha-2,6-, or alpha-2,8-linked sialic acid), including NCAM1, NCAM1 N-glycans, FETUB N-glycans, and to a lesser extent sialylparagloboside (SPG) and AHSG, which does not require the initial addition of an alpha 2,8-sialic acid. However, does not exhibit sialic acid-polymerase activity. Catalyzes polysialic acid synthesis in the hippocampal on NCAM1 and supports neurite outgrowth. ST8SIA2-mediated polysialylation influences on oligodendrocyte differentiation and may promote the integrity of myelin and axons. This chain is Alpha-2,8-sialyltransferase 8B, found in Homo sapiens (Human).